The primary structure comprises 448 residues: Histidinol dehydrogenase (448 aa).

NAD(+)-binding residues include Y136, Q197, and N220. S243, Q265, and H268 together coordinate substrate. Residues Q265 and H268 each coordinate Zn(2+). Catalysis depends on proton acceptor residues E333 and H334. Residues H334, D367, E421, and H426 each coordinate substrate. D367 is a binding site for Zn(2+). H426 contributes to the Zn(2+) binding site.

The protein belongs to the histidinol dehydrogenase family. Zn(2+) serves as cofactor.

It catalyses the reaction L-histidinol + 2 NAD(+) + H2O = L-histidine + 2 NADH + 3 H(+). The protein operates within amino-acid biosynthesis; L-histidine biosynthesis; L-histidine from 5-phospho-alpha-D-ribose 1-diphosphate: step 9/9. Functionally, catalyzes the sequential NAD-dependent oxidations of L-histidinol to L-histidinaldehyde and then to L-histidine. The sequence is that of Histidinol dehydrogenase from Pseudomonas syringae pv. tomato (strain ATCC BAA-871 / DC3000).